The sequence spans 65 residues: Large ribosomal subunit protein bL35 (65 aa).

Residues Met-1 to Ile-22 form a disordered region.

The protein belongs to the bacterial ribosomal protein bL35 family.

This is Large ribosomal subunit protein bL35 from Flavobacterium johnsoniae (strain ATCC 17061 / DSM 2064 / JCM 8514 / BCRC 14874 / CCUG 350202 / NBRC 14942 / NCIMB 11054 / UW101) (Cytophaga johnsonae).